The following is a 206-amino-acid chain: Transcription elongation factor A protein-like 5 (206 aa).

A compositionally biased stretch (basic and acidic residues) spans 1 to 26 (MEKLYKENEGKPENERNLESEGKPED). The disordered stretch occupies residues 1–206 (MEKLYKENEG…QKDLEDVPYV (206 aa)). A compositionally biased stretch (acidic residues) spans 27–42 (EGSTEDEGKSDEEEKP). Positions 43–56 (DMEGKTECEGKRED) are enriched in basic and acidic residues. The span at 57 to 70 (EGEPGDEGQLEDEG) shows a compositional bias: acidic residues. Composition is skewed to basic and acidic residues over residues 71-86 (NQEK…KPQS), 102-113 (AAEKRPAEDYVP), 121-160 (DRGT…EELR), and 196-206 (GQKDLEDVPYV).

The protein belongs to the TFS-II family. TFA subfamily.

The protein localises to the nucleus. In terms of biological role, may be involved in transcriptional regulation. The sequence is that of Transcription elongation factor A protein-like 5 (TCEAL5) from Homo sapiens (Human).